Reading from the N-terminus, the 473-residue chain is Vasculin (473 aa).

Disordered stretches follow at residues 1–25 (MAQHDFAPAWLNFPTPPSSTKSSLN), 44–170 (RRRH…SRTP), and 186–341 (SGFP…HQER). S49 is subject to Phosphoserine. Residue R87 is modified to Omega-N-methylarginine. The segment covering 94-117 (NSRSRSSIFHSGKSQGLHENSIPD) has biased composition (polar residues). A compositionally biased stretch (basic and acidic residues) spans 119–133 (ETGRKEDKRERRQFE). Composition is skewed to polar residues over residues 193–204 (NLQSQPVKNGTG) and 248–286 (NFNTFKSTAKNISPSTNSVKECNRSNSSSPVDKLNQQPR). Phosphoserine occurs at positions 274, 276, 322, and 381. Residues 293 to 329 (MRSDKKSEFLKALKRDRVEEEHEDESHAGSEKDDDSF) are compositionally biased toward basic and acidic residues. The segment at 450–473 (TFKPTIENDDTETSSSDTSDDDDV) is disordered. The span at 456–473 (ENDDTETSSSDTSDDDDV) shows a compositional bias: acidic residues.

It belongs to the vasculin family. In terms of assembly, interacts with GTF2B, GTF2F2, RNA polymerase II and TBP. In terms of tissue distribution, ubiquitously expressed (at protein level).

The protein resides in the nucleus. Functionally, functions as a GC-rich promoter-specific transactivating transcription factor. The sequence is that of Vasculin (Gpbp1) from Mus musculus (Mouse).